Consider the following 367-residue polypeptide: Anhydro-N-acetylmuramic acid kinase (367 aa).

10–17 serves as a coordination point for ATP; that stretch reads GTSLDGVD.

The protein belongs to the anhydro-N-acetylmuramic acid kinase family.

The catalysed reaction is 1,6-anhydro-N-acetyl-beta-muramate + ATP + H2O = N-acetyl-D-muramate 6-phosphate + ADP + H(+). It participates in amino-sugar metabolism; 1,6-anhydro-N-acetylmuramate degradation. The protein operates within cell wall biogenesis; peptidoglycan recycling. In terms of biological role, catalyzes the specific phosphorylation of 1,6-anhydro-N-acetylmuramic acid (anhMurNAc) with the simultaneous cleavage of the 1,6-anhydro ring, generating MurNAc-6-P. Is required for the utilization of anhMurNAc either imported from the medium or derived from its own cell wall murein, and thus plays a role in cell wall recycling. This chain is Anhydro-N-acetylmuramic acid kinase, found in Aliivibrio fischeri (strain ATCC 700601 / ES114) (Vibrio fischeri).